Reading from the N-terminus, the 408-residue chain is Putative UPF0496 protein 2 (408 aa).

The next 2 helical transmembrane spans lie at 224–244 and 252–272; these read RIARGTAAAALVGACAAAIVA and ALVGIGVAAAAFGATPAGAAR. A disordered region spans residues 385 to 408; sequence MARGLPPPSPATVTTTSEERLTSS.

The protein belongs to the UPF0496 family.

The protein resides in the membrane. The sequence is that of Putative UPF0496 protein 2 from Oryza sativa subsp. indica (Rice).